A 54-amino-acid polypeptide reads, in one-letter code: Small ribosomal subunit protein uS14 (54 aa).

Positions 19, 22, 37, and 40 each coordinate Zn(2+).

The protein belongs to the universal ribosomal protein uS14 family. Zinc-binding uS14 subfamily. In terms of assembly, part of the 30S ribosomal subunit. The cofactor is Zn(2+).

Functionally, binds 16S rRNA, required for the assembly of 30S particles. This is Small ribosomal subunit protein uS14 from Aeropyrum pernix (strain ATCC 700893 / DSM 11879 / JCM 9820 / NBRC 100138 / K1).